A 168-amino-acid chain; its full sequence is Crossover junction endodeoxyribonuclease RuvC (168 aa).

Residues aspartate 9, glutamate 69, and aspartate 141 contribute to the active site. 3 residues coordinate Mg(2+): aspartate 9, glutamate 69, and aspartate 141.

Belongs to the RuvC family. Homodimer which binds Holliday junction (HJ) DNA. The HJ becomes 2-fold symmetrical on binding to RuvC with unstacked arms; it has a different conformation from HJ DNA in complex with RuvA. In the full resolvosome a probable DNA-RuvA(4)-RuvB(12)-RuvC(2) complex forms which resolves the HJ. It depends on Mg(2+) as a cofactor.

The protein resides in the cytoplasm. The enzyme catalyses Endonucleolytic cleavage at a junction such as a reciprocal single-stranded crossover between two homologous DNA duplexes (Holliday junction).. Its function is as follows. The RuvA-RuvB-RuvC complex processes Holliday junction (HJ) DNA during genetic recombination and DNA repair. Endonuclease that resolves HJ intermediates. Cleaves cruciform DNA by making single-stranded nicks across the HJ at symmetrical positions within the homologous arms, yielding a 5'-phosphate and a 3'-hydroxyl group; requires a central core of homology in the junction. The consensus cleavage sequence is 5'-(A/T)TT(C/G)-3'. Cleavage occurs on the 3'-side of the TT dinucleotide at the point of strand exchange. HJ branch migration catalyzed by RuvA-RuvB allows RuvC to scan DNA until it finds its consensus sequence, where it cleaves and resolves the cruciform DNA. This chain is Crossover junction endodeoxyribonuclease RuvC, found in Bdellovibrio bacteriovorus (strain ATCC 15356 / DSM 50701 / NCIMB 9529 / HD100).